Here is a 288-residue protein sequence, read N- to C-terminus: Acetylglutamate kinase (288 aa).

Substrate is bound by residues 66–67, Arg88, and Asn182; that span reads GG.

The protein belongs to the acetylglutamate kinase family. ArgB subfamily.

It localises to the cytoplasm. The catalysed reaction is N-acetyl-L-glutamate + ATP = N-acetyl-L-glutamyl 5-phosphate + ADP. Its pathway is amino-acid biosynthesis; L-arginine biosynthesis; N(2)-acetyl-L-ornithine from L-glutamate: step 2/4. In terms of biological role, catalyzes the ATP-dependent phosphorylation of N-acetyl-L-glutamate. The polypeptide is Acetylglutamate kinase (Brachyspira hyodysenteriae (strain ATCC 49526 / WA1)).